We begin with the raw amino-acid sequence, 805 residues long: MASPSGQYIFGEFSDDEFKQFFVTARCTVELPPYNEHFFPCGPQSSGDFQDDMHLKFSEVIHGISGEDCPRIEFGIEEVIDHSTALPNNTDYSISSNLNPQAPEFILTCSSSPKTSNNVLHENNFDAINCQFSECAIPDGSGNADSDGTSGTGQRERKKKKKRPPGYYSYLEGVGDVPSETLVNGHANSTGLNSISTDDPDLAEDIPISTTSPRTCNSPDNFVDLNNEALSNDASMHNALDNARTAGQPEECSVTSSEQSCIPSDNGRESPVRTAVVQPFAGTDTTENLGVTNGQTLESSEEGTASNGVVLLPEVSSLSEEAKPEETSTAQAVVHLPGSASANPPAKSWASLFHNSKPSSTTQVAYVETKNATPVTSPQVTEKQVEIKEGPVPVSEDPVAIKIAELLEEVKLVHKPVSLQPRGLINKGNWCYINATLQALVACPPMYHLMKSIPVYTKAQRPCTSTPMIDSFVRLMNEFTNMPILPKAKQASGEKVIRDIRPGAPFEPAYIYRLLTVFKSSLSEKGRQEDAEEYLGFILNGLHEEMLSLKKLLLPQNDKIHINNGPDPVSEKEEINKDEQEGSDEEWEQVGPRHKSSVTRQADFVQTPITDIFGGHMRSVVYQQSSKESATLQPFFTLQLDIQSEKIRTVQDALESLVARESVQGYTTKTKQEVEICRRVTLEELPPVLVLHLKRFVFEKTGGCQKLIKNIEYPVDLEISKDLLSPGVKSKIFKGQRTYRLFAVVYHHGNSATGGHYTTDVFQIGLNGWLRIDDQTVKVINQYQVVKQTVERTAYLLYYRRVDLL.

The disordered stretch occupies residues 139 to 170; that stretch reads DGSGNADSDGTSGTGQRERKKKKKRPPGYYSY. Residues 143 to 153 are compositionally biased toward polar residues; sequence NADSDGTSGTG. Residues 422–802 enclose the USP domain; sequence RGLINKGNWC…TAYLLYYRRV (381 aa). Cys-431 functions as the Nucleophile in the catalytic mechanism. A disordered region spans residues 561–593; sequence HINNGPDPVSEKEEINKDEQEGSDEEWEQVGPR. Over residues 569 to 580 the composition is skewed to basic and acidic residues; sequence VSEKEEINKDEQ. The active-site Proton acceptor is His-756.

The protein belongs to the peptidase C19 family. USP10 subfamily.

It localises to the cytoplasm. The protein resides in the nucleus. It catalyses the reaction Thiol-dependent hydrolysis of ester, thioester, amide, peptide and isopeptide bonds formed by the C-terminal Gly of ubiquitin (a 76-residue protein attached to proteins as an intracellular targeting signal).. In terms of biological role, hydrolase that can remove conjugated ubiquitin from target proteins such as p53/tp53, rps2/us5, rps3/us3, rps10/eS10, becn1, snx3 and cftr. Acts as an essential regulator of p53/tp53 stability: in unstressed cells, specifically deubiquitinates p53/tp53 in the cytoplasm, leading to counteracts MDM2 action and stabilize p53/tp53. Following DNA damage, translocates to the nucleus and deubiquitinates p53/tp53, leading to regulate the p53/TP53-dependent DNA damage response. Component of a regulatory loop that controls autophagy and p53/tp53 levels. Plays a key role in 40S ribosome subunit recycling when a ribosome has stalled during translation: acts both by inhibiting formation of stress granules, which store stalled translation pre-initiation complexes, and mediating deubiquitination of 40S ribosome subunits. Deubiquitinates cftr in early endosomes, enhancing its endocytic recycling. The sequence is that of Ubiquitin carboxyl-terminal hydrolase 10 (usp10) from Xenopus tropicalis (Western clawed frog).